The sequence spans 452 residues: Phosphatidate cytidylyltransferase, mitochondrial (452 aa).

It belongs to the TAM41 family. Requires Mg(2+) as cofactor.

Its subcellular location is the mitochondrion inner membrane. It catalyses the reaction a 1,2-diacyl-sn-glycero-3-phosphate + CTP + H(+) = a CDP-1,2-diacyl-sn-glycerol + diphosphate. It functions in the pathway phospholipid metabolism; CDP-diacylglycerol biosynthesis; CDP-diacylglycerol from sn-glycerol 3-phosphate: step 3/3. Catalyzes the conversion of phosphatidic acid (PA) to CDP-diacylglycerol (CDP-DAG), an essential intermediate in the synthesis of phosphatidylglycerol, cardiolipin and phosphatidylinositol. The sequence is that of Phosphatidate cytidylyltransferase, mitochondrial (TAMM41) from Homo sapiens (Human).